A 352-amino-acid polypeptide reads, in one-letter code: C-C chemokine receptor type 5 (352 aa).

Residues 1–30 (MDYQVSSPIYDIDYGPSEPCRKIDVKQMGA) lie on the Extracellular side of the membrane. Tyr3 carries the post-translational modification Sulfotyrosine. Residues Ser6 and Ser7 are each glycosylated (O-linked (GalNAc...) serine). Tyr10 and Tyr14 each carry sulfotyrosine. Disulfide bonds link Cys20–Cys269 and Cys101–Cys178. The chain crosses the membrane as a helical span at residues 31 to 58 (QLLPPLYSLVFLFGFVGNMLVVLILINC). Over 59 to 68 (KRLKSMTDIY) the chain is Cytoplasmic. A helical membrane pass occupies residues 69–89 (LLNLAISDLLFLFTIPFWAHY). The Extracellular segment spans residues 90–102 (AAGQWDFGNTMCQ). Residues 103–124 (FLTALYFIGFFSGIFFIILLTI) form a helical membrane-spanning segment. Topologically, residues 125–141 (DRYLAIVHAVFALKART) are cytoplasmic. Residues 142 to 166 (VTFGVVTSVITWVVAVFASLPGIIF) traverse the membrane as a helical segment. Over 167 to 198 (TRSQKEGYHYSCSPHFPFSQYRFWKNFETLKM) the chain is Extracellular. The chain crosses the membrane as a helical span at residues 199-218 (VILGLVLPLLVMVICYSGIL). Residues 219–235 (KTLLRCRNEKKRHRAVR) are Cytoplasmic-facing. The chain crosses the membrane as a helical span at residues 236–260 (LIFTIMIVYFLFWAPYNIVLLINTY). Topologically, residues 261–277 (PDFFGVNNCNSSNRLDQ) are extracellular. Residues 278-301 (AMQVTETLGMTHCCVNPIIYAFVG) form a helical membrane-spanning segment. The Cytoplasmic portion of the chain corresponds to 302 to 352 (EKFRNYLVIFFQKHIAKRFCKCCSIFQKEAPERANSVYTRSTGEQEISVGL). S-palmitoyl cysteine attachment occurs at residues Cys321, Cys323, and Cys324. Phosphoserine; by BARK1 is present on residues Ser337, Ser342, and Ser349.

This sequence belongs to the G-protein coupled receptor 1 family. Interacts with PRAF2. Efficient ligand binding to CCL3/MIP-1alpha and CCL4/MIP-1beta requires sulfation, O-glycosylation and sialic acid modifications. Glycosylation on Ser-6 is required for efficient binding of CCL4. Interacts with GRK2. Interacts with ARRB1 and ARRB2. Interacts with CNIH4. Interacts with S100A4; this interaction stimulates T-lymphocyte chemotaxis. Sulfated on at least 2 of the N-terminal tyrosines. Sulfation is required for efficient binding of the chemokines, CCL3 and CCL4. In terms of processing, palmitoylation in the C-terminal is important for cell surface expression. Post-translationally, phosphorylation on serine residues in the C-terminal is stimulated by binding CC chemokines especially by APO-RANTES. O-glycosylated, but not N-glycosylated. Ser-6 appears to be the major site even if Ser-7 may be also O-glycosylated. Also sialylated glycans present which contribute to chemokine binding. Ser-17 may also be glycosylated and, if so, with small moieties such as a T-antigen.

It is found in the cell membrane. In terms of biological role, receptor for a number of inflammatory CC-chemokines including CCL3/MIP-1-alpha, CCL4/MIP-1-beta and RANTES and subsequently transduces a signal by increasing the intracellular calcium ion level. May play a role in the control of granulocytic lineage proliferation or differentiation. Participates in T-lymphocyte migration to the infection site by acting as a chemotactic receptor. This Saimiri sciureus (Common squirrel monkey) protein is C-C chemokine receptor type 5 (CCR5).